Consider the following 447-residue polypeptide: D-ribitol-5-phosphate cytidylyltransferase (447 aa).

This sequence belongs to the IspD/TarI cytidylyltransferase family. IspD subfamily. Homodimer.

It localises to the cytoplasm. Its subcellular location is the cytosol. The catalysed reaction is D-ribitol 5-phosphate + CTP + H(+) = CDP-L-ribitol + diphosphate. The enzyme catalyses D-ribose 5-phosphate + CTP + H(+) = CDP-D-ribose + diphosphate. It carries out the reaction D-ribulose 5-phosphate + CTP + H(+) = CDP-D-ribulose + diphosphate. Its pathway is protein modification; protein glycosylation. Functionally, cytidylyltransferase required for protein O-linked mannosylation. Catalyzes the formation of CDP-ribitol nucleotide sugar from D-ribitol 5-phosphate. CDP-ribitol is a substrate of FKTN during the biosynthesis of the phosphorylated O-mannosyl trisaccharide (N-acetylgalactosamine-beta-3-N-acetylglucosamine-beta-4-(phosphate-6-)mannose), a carbohydrate structure present in alpha-dystroglycan (DAG1), which is required for binding laminin G-like domain-containing extracellular proteins with high affinity. Shows activity toward other pentose phosphate sugars and mediates formation of CDP-ribulose or CDP-ribose using CTP and ribulose-5-phosphate or ribose-5-phosphate, respectively. Not involved in dolichol production. This Rattus norvegicus (Rat) protein is D-ribitol-5-phosphate cytidylyltransferase (Crppa).